We begin with the raw amino-acid sequence, 207 residues long: Large ribosomal subunit protein uL4 (207 aa).

Residues alanine 50–glycine 76 are disordered.

The protein belongs to the universal ribosomal protein uL4 family. As to quaternary structure, part of the 50S ribosomal subunit.

One of the primary rRNA binding proteins, this protein initially binds near the 5'-end of the 23S rRNA. It is important during the early stages of 50S assembly. It makes multiple contacts with different domains of the 23S rRNA in the assembled 50S subunit and ribosome. Functionally, forms part of the polypeptide exit tunnel. The sequence is that of Large ribosomal subunit protein uL4 from Staphylococcus aureus (strain JH9).